The following is a 296-amino-acid chain: Phosphoribosylaminoimidazole-succinocarboxamide synthase (296 aa).

It belongs to the SAICAR synthetase family.

The catalysed reaction is 5-amino-1-(5-phospho-D-ribosyl)imidazole-4-carboxylate + L-aspartate + ATP = (2S)-2-[5-amino-1-(5-phospho-beta-D-ribosyl)imidazole-4-carboxamido]succinate + ADP + phosphate + 2 H(+). The protein operates within purine metabolism; IMP biosynthesis via de novo pathway; 5-amino-1-(5-phospho-D-ribosyl)imidazole-4-carboxamide from 5-amino-1-(5-phospho-D-ribosyl)imidazole-4-carboxylate: step 1/2. The chain is Phosphoribosylaminoimidazole-succinocarboxamide synthase from Lachnospira eligens (strain ATCC 27750 / DSM 3376 / VPI C15-48 / C15-B4) (Eubacterium eligens).